Here is a 277-residue protein sequence, read N- to C-terminus: Probable endonuclease 4 (277 aa).

His67, His107, Glu142, Asp176, His179, His211, Asp224, His226, and Glu256 together coordinate Zn(2+).

This sequence belongs to the AP endonuclease 2 family. Zn(2+) serves as cofactor.

The catalysed reaction is Endonucleolytic cleavage to 5'-phosphooligonucleotide end-products.. In terms of biological role, endonuclease IV plays a role in DNA repair. It cleaves phosphodiester bonds at apurinic or apyrimidinic (AP) sites, generating a 3'-hydroxyl group and a 5'-terminal sugar phosphate. The sequence is that of Probable endonuclease 4 from Clostridium botulinum (strain Alaska E43 / Type E3).